Here is a 295-residue protein sequence, read N- to C-terminus: Putative NADH-ubiquinone oxidoreductase MJ0520 (295 aa).

8 helical membrane passes run 8–28 (LIGA…LLGL), 69–89 (LYIF…IIAI), 129–149 (VFSA…YLTT), 163–183 (IHGS…ILLV), 199–219 (IVSG…YIAE), 220–240 (AIAY…PLVI), 243–263 (PVLT…VNGL), and 273–293 (VMLQ…RLIV).

This sequence belongs to the complex I subunit 1 family.

It localises to the cell membrane. It carries out the reaction a ubiquinone + NADH + 5 H(+)(in) = a ubiquinol + NAD(+) + 4 H(+)(out). The protein is Putative NADH-ubiquinone oxidoreductase MJ0520 of Methanocaldococcus jannaschii (strain ATCC 43067 / DSM 2661 / JAL-1 / JCM 10045 / NBRC 100440) (Methanococcus jannaschii).